Reading from the N-terminus, the 259-residue chain is Imidazole glycerol phosphate synthase subunit HisF (259 aa).

Residues D11 and D130 contribute to the active site.

Belongs to the HisA/HisF family. In terms of assembly, heterodimer of HisH and HisF.

The protein localises to the cytoplasm. It catalyses the reaction 5-[(5-phospho-1-deoxy-D-ribulos-1-ylimino)methylamino]-1-(5-phospho-beta-D-ribosyl)imidazole-4-carboxamide + L-glutamine = D-erythro-1-(imidazol-4-yl)glycerol 3-phosphate + 5-amino-1-(5-phospho-beta-D-ribosyl)imidazole-4-carboxamide + L-glutamate + H(+). The protein operates within amino-acid biosynthesis; L-histidine biosynthesis; L-histidine from 5-phospho-alpha-D-ribose 1-diphosphate: step 5/9. Functionally, IGPS catalyzes the conversion of PRFAR and glutamine to IGP, AICAR and glutamate. The HisF subunit catalyzes the cyclization activity that produces IGP and AICAR from PRFAR using the ammonia provided by the HisH subunit. This is Imidazole glycerol phosphate synthase subunit HisF from Oleidesulfovibrio alaskensis (strain ATCC BAA-1058 / DSM 17464 / G20) (Desulfovibrio alaskensis).